The sequence spans 212 residues: MEVLIFELILIAVLIPLNSVVKKHVPKWKGKAGEKLVKRMLSKLDPKSYYVLHNVTVYTEYGDTTQIDHIVIAETGVFVVETKNYEGWIYGSEKAARWTQGIFRKKSSFQNPFHQNYKHIKAIEWLIEQQLPCISMAAFHPKCSLKRVNVHSKEKHVLYYNDLQKCIESYTDVQLTNDEVQHIYHTILRANIMDKDIEKKHVKYLHNKFAKQ.

The 118-residue stretch at K29 to K146 folds into the NERD domain.

This is an uncharacterized protein from Bacillus anthracis.